A 134-amino-acid chain; its full sequence is Fluoride-specific ion channel FluC (134 aa).

The next 4 membrane-spanning stretches (helical) occupy residues 7–27 (LAVA…TIMA), 38–58 (GTLL…IVLV), 69–89 (LFLF…AAES), and 110–130 (VGSL…LLGH). Glycine 77 and threonine 80 together coordinate Na(+).

The protein belongs to the fluoride channel Fluc/FEX (TC 1.A.43) family.

It is found in the cell inner membrane. It catalyses the reaction fluoride(in) = fluoride(out). Its activity is regulated as follows. Na(+) is not transported, but it plays an essential structural role and its presence is essential for fluoride channel function. Functionally, fluoride-specific ion channel. Important for reducing fluoride concentration in the cell, thus reducing its toxicity. The chain is Fluoride-specific ion channel FluC from Legionella pneumophila (strain Lens).